The following is a 600-amino-acid chain: Aspartate--tRNA(Asp/Asn) ligase (600 aa).

An L-aspartate-binding site is contributed by Glu181. Residues 205–208 (QQFK) are aspartate. Arg227 is an L-aspartate binding site. ATP-binding positions include 227–229 (RDE) and Gln236. His455 provides a ligand contact to L-aspartate. Glu489 provides a ligand contact to ATP. Arg496 contributes to the L-aspartate binding site. 541-544 (GIDR) is an ATP binding site.

The protein belongs to the class-II aminoacyl-tRNA synthetase family. Type 1 subfamily. As to quaternary structure, homodimer.

It localises to the cytoplasm. It carries out the reaction tRNA(Asx) + L-aspartate + ATP = L-aspartyl-tRNA(Asx) + AMP + diphosphate. Functionally, aspartyl-tRNA synthetase with relaxed tRNA specificity since it is able to aspartylate not only its cognate tRNA(Asp) but also tRNA(Asn). Reaction proceeds in two steps: L-aspartate is first activated by ATP to form Asp-AMP and then transferred to the acceptor end of tRNA(Asp/Asn). The chain is Aspartate--tRNA(Asp/Asn) ligase from Rubrobacter xylanophilus (strain DSM 9941 / JCM 11954 / NBRC 16129 / PRD-1).